Here is a 79-residue protein sequence, read N- to C-terminus: Short neurotoxin 3 (79 aa).

The first 21 residues, 1–21, serve as a signal peptide directing secretion; it reads MKTLLLTLVMVTIMCLDLGYT. Disulfide bonds link Cys-24-Cys-41, Cys-34-Cys-59, Cys-63-Cys-71, and Cys-72-Cys-77.

This sequence belongs to the three-finger toxin family. Short-chain subfamily. Type III alpha-neurotoxin sub-subfamily. Expressed by the venom gland.

The protein localises to the secreted. Functionally, binds with high affinity to muscle nicotinic acetylcholine receptor (nAChR) and hinders acetylcholine binding to the receptor, thereby impairing neuromuscular transmission. Competes with the binding of alpha-bungarotoxin on muscle AChR (from Torpedo) with an IC(50) of 0.30 uM. Causes muscle paralysis, spasms and increased respiration. The protein is Short neurotoxin 3 of Pseudonaja textilis (Eastern brown snake).